A 479-amino-acid polypeptide reads, in one-letter code: MPTSAKALTKRLIEIPEMRRIQHLHFIGIGGSGMCGIAEVMNNQGYQVSGSDITESLVTKRLAQIGIDIAIGHDSKNIANADVIVVSSAIDRSNPEVKAALEARLPVVRRADMLGELMRYRHGIAIAGAHGKTTTTSLLTTMMAEGNLDPTYVIGGKLNASGKNAALGSSRFLIAEADESDASFLSLHPMAAIVTNIDQDHMETYGNSFDKLKAAYIQFLQNMPFYGLAVVCGDDPELYAMIDDIGRPVLTFGLEPFNDVQAVDLVTEGTKTHFTVLRRDHEPLRLTLNIPGVHNVYNALAAITMATDEGVDDAAITRALQKFEGVGRRFEQHASVEIDDGNVLLIDDYGHHPKEVDATIKAARQSFPERRLVMMFQPHRYSRTRDCFDDFVEVLSSVDELLLLDVYSAGESPIAGADTKALARSIRLRGAVEPTIVDKDNIAPVMQRLLKAGDMLITQGAGNVGQIAIDLAANNLYIK.

128 to 134 serves as a coordination point for ATP; it reads GAHGKTT.

Belongs to the MurCDEF family.

The protein resides in the cytoplasm. The catalysed reaction is UDP-N-acetyl-alpha-D-muramate + L-alanine + ATP = UDP-N-acetyl-alpha-D-muramoyl-L-alanine + ADP + phosphate + H(+). It participates in cell wall biogenesis; peptidoglycan biosynthesis. Cell wall formation. The chain is UDP-N-acetylmuramate--L-alanine ligase from Psychrobacter cryohalolentis (strain ATCC BAA-1226 / DSM 17306 / VKM B-2378 / K5).